The primary structure comprises 174 residues: Shikimate kinase (174 aa).

Position 15-20 (glycine 15–threonine 20) interacts with ATP. Serine 19 provides a ligand contact to Mg(2+). Residues aspartate 37, arginine 61, and glycine 82 each coordinate substrate. ATP is bound at residue arginine 120. Substrate is bound at residue arginine 138.

Belongs to the shikimate kinase family. As to quaternary structure, monomer. Mg(2+) serves as cofactor.

It localises to the cytoplasm. It carries out the reaction shikimate + ATP = 3-phosphoshikimate + ADP + H(+). It participates in metabolic intermediate biosynthesis; chorismate biosynthesis; chorismate from D-erythrose 4-phosphate and phosphoenolpyruvate: step 5/7. Functionally, catalyzes the specific phosphorylation of the 3-hydroxyl group of shikimic acid using ATP as a cosubstrate. The chain is Shikimate kinase from Staphylococcus aureus (strain MSSA476).